A 166-amino-acid polypeptide reads, in one-letter code: Small ribosomal subunit protein uS5 (166 aa).

Residues 12–75 enclose the S5 DRBM domain; that stretch reads YIEKLVQVNR…EAARRNMIQV (64 aa).

This sequence belongs to the universal ribosomal protein uS5 family. As to quaternary structure, part of the 30S ribosomal subunit. Contacts proteins S4 and S8.

Its function is as follows. With S4 and S12 plays an important role in translational accuracy. In terms of biological role, located at the back of the 30S subunit body where it stabilizes the conformation of the head with respect to the body. The sequence is that of Small ribosomal subunit protein uS5 from Pseudomonas fluorescens (strain ATCC BAA-477 / NRRL B-23932 / Pf-5).